A 377-amino-acid polypeptide reads, in one-letter code: Succinyl-diaminopimelate desuccinylase (377 aa).

H66 is a binding site for Zn(2+). D68 is a catalytic residue. D99 is a binding site for Zn(2+). E133 acts as the Proton acceptor in catalysis. The Zn(2+) site is built by E134, E162, and H348.

It belongs to the peptidase M20A family. DapE subfamily. In terms of assembly, homodimer. It depends on Zn(2+) as a cofactor. The cofactor is Co(2+).

It carries out the reaction N-succinyl-(2S,6S)-2,6-diaminopimelate + H2O = (2S,6S)-2,6-diaminopimelate + succinate. The protein operates within amino-acid biosynthesis; L-lysine biosynthesis via DAP pathway; LL-2,6-diaminopimelate from (S)-tetrahydrodipicolinate (succinylase route): step 3/3. Catalyzes the hydrolysis of N-succinyl-L,L-diaminopimelic acid (SDAP), forming succinate and LL-2,6-diaminopimelate (DAP), an intermediate involved in the bacterial biosynthesis of lysine and meso-diaminopimelic acid, an essential component of bacterial cell walls. The protein is Succinyl-diaminopimelate desuccinylase of Bordetella avium (strain 197N).